Reading from the N-terminus, the 530-residue chain is Ubiquitin carboxyl-terminal hydrolase 17-like protein 24 (530 aa).

The USP domain occupies 80–375; sequence AGLQNMGNTC…QAYVLFYIQK (296 aa). Residue C89 is the Nucleophile of the active site. Residue H334 is the Proton acceptor of the active site. Composition is skewed to basic and acidic residues over residues 382–392 and 398–412; these read SESVSRGREPR and DTDR…KRDH. Disordered stretches follow at residues 382 to 412 and 477 to 530; these read SESV…KRDH and NHHP…LVCQ. Residues 493 to 505 show a composition bias toward polar residues; sequence TPTHQESMNTGTL. Residues 510–524 are compositionally biased toward basic residues; sequence GRARRSKGKNKHSKR.

This sequence belongs to the peptidase C19 family. USP17 subfamily. Expressed in heart, brain, liver and skeletal muscle.

It is found in the nucleus. It localises to the nucleolus. The protein localises to the endoplasmic reticulum. It carries out the reaction Thiol-dependent hydrolysis of ester, thioester, amide, peptide and isopeptide bonds formed by the C-terminal Gly of ubiquitin (a 76-residue protein attached to proteins as an intracellular targeting signal).. Its function is as follows. Deubiquitinating enzyme that removes conjugated ubiquitin from specific proteins to regulate different cellular processes that may include cell proliferation, progression through the cell cycle, apoptosis, cell migration, and the cellular response to viral infection. This Homo sapiens (Human) protein is Ubiquitin carboxyl-terminal hydrolase 17-like protein 24 (USP17L24).